The following is a 154-amino-acid chain: Prefoldin subunit alpha (154 aa).

Positions Asp92–Gln102 are enriched in polar residues. The disordered stretch occupies residues Asp92–Glu154. The span at Asp103–Asp114 shows a compositional bias: basic and acidic residues. Over residues Gln128–Gln148 the composition is skewed to low complexity.

Belongs to the prefoldin subunit alpha family. Heterohexamer of two alpha and four beta subunits.

The protein localises to the cytoplasm. Its function is as follows. Molecular chaperone capable of stabilizing a range of proteins. Seems to fulfill an ATP-independent, HSP70-like function in archaeal de novo protein folding. In Haloquadratum walsbyi (strain DSM 16790 / HBSQ001), this protein is Prefoldin subunit alpha.